The chain runs to 452 residues: Methionine aminopeptidase 2-1 (452 aa).

Positions 1 to 100 (MAAKVADDVA…VRIDEVFPND (100 aa)) are disordered. Acidic residues predominate over residues 37-51 (EHDDSDDDNEAEDGA). Positions 60–73 (KKKKKRKPRKKKKA) are enriched in basic residues. Substrate is bound at residue His205. Positions 225, 236, and 305 each coordinate a divalent metal cation. Substrate is bound at residue His313. Positions 338 and 433 each coordinate a divalent metal cation.

The protein belongs to the peptidase M24A family. Methionine aminopeptidase eukaryotic type 2 subfamily. Requires Co(2+) as cofactor. Zn(2+) serves as cofactor. The cofactor is Mn(2+). It depends on Fe(2+) as a cofactor.

It localises to the cytoplasm. It catalyses the reaction Release of N-terminal amino acids, preferentially methionine, from peptides and arylamides.. Its function is as follows. Cotranslationally removes the N-terminal methionine from nascent proteins. The N-terminal methionine is often cleaved when the second residue in the primary sequence is small and uncharged (Met-Ala-, Cys, Gly, Pro, Ser, Thr, or Val). The sequence is that of Methionine aminopeptidase 2-1 from Pyrenophora teres f. teres (strain 0-1) (Barley net blotch fungus).